The primary structure comprises 649 residues: Extracellular metalloproteinase 4 (649 aa).

The first 18 residues, 1-18 (MHGLLLAGLLALPSNVLG), serve as a signal peptide directing secretion. The propeptide occupies 19-260 (HPAEPPNSVN…VHGVVDYVAS (242 aa)). His443 contacts Zn(2+). Glu444 is an active-site residue. His447 contributes to the Zn(2+) binding site. Asn494 and Asn609 each carry an N-linked (GlcNAc...) asparagine glycan.

This sequence belongs to the peptidase M36 family. Zn(2+) serves as cofactor.

It is found in the secreted. Secreted metalloproteinase probably acting as a virulence factor. The protein is Extracellular metalloproteinase 4 (MEP4) of Arthroderma otae (strain ATCC MYA-4605 / CBS 113480) (Microsporum canis).